The chain runs to 372 residues: uncharacterized protein (372 aa).

4–18 (YIIVGAGILGASTAY) is an FAD binding site.

The protein belongs to the DadA oxidoreductase family. Requires FAD as cofactor.

This is an uncharacterized protein from Bacillus subtilis (strain 168).